Reading from the N-terminus, the 473-residue chain is Ribulose bisphosphate carboxylase large chain (473 aa).

Residue K8 is modified to N6,N6,N6-trimethyllysine. Substrate-binding residues include N117 and T167. K169 serves as the catalytic Proton acceptor. K171 contacts substrate. Mg(2+)-binding residues include K195, D197, and E198. Residue K195 is modified to N6-carboxylysine. H288 (proton acceptor) is an active-site residue. Residues R289, H321, and S373 each contribute to the substrate site.

The protein belongs to the RuBisCO large chain family. Type I subfamily. In terms of assembly, heterohexadecamer of 8 large chains and 8 small chains; disulfide-linked. The disulfide link is formed within the large subunit homodimers. Requires Mg(2+) as cofactor. In terms of processing, the disulfide bond which can form in the large chain dimeric partners within the hexadecamer appears to be associated with oxidative stress and protein turnover.

The protein resides in the plastid. The protein localises to the chloroplast. The catalysed reaction is 2 (2R)-3-phosphoglycerate + 2 H(+) = D-ribulose 1,5-bisphosphate + CO2 + H2O. It catalyses the reaction D-ribulose 1,5-bisphosphate + O2 = 2-phosphoglycolate + (2R)-3-phosphoglycerate + 2 H(+). Functionally, ruBisCO catalyzes two reactions: the carboxylation of D-ribulose 1,5-bisphosphate, the primary event in carbon dioxide fixation, as well as the oxidative fragmentation of the pentose substrate in the photorespiration process. Both reactions occur simultaneously and in competition at the same active site. This Amorphophallus titanum (Titan arum) protein is Ribulose bisphosphate carboxylase large chain.